The sequence spans 382 residues: MQFLSVIPEQVESAAQDLAGIRSALSASYAAAAGPTTAVVSAAEDEVSTAIASIFGAYGRQCQVLSAQASAFHDEFVNLLKTGATAYRNTEFANAQSNVLNAVNAPARSLLGHPSAAESVQNSAPTLGGGHSTVTAGLAAQAGRAVATVEQQAAAAVAPLPSAGAGLAQVVNGVVTAGQGSAAKLATALQSAAPWLAKSGGEFIVAGQSALTGVALLQPAVVGVVQAGGTFLTAGTSAATGLGLLTLAGVEFSQGVGNLALASGTAATGLGLLGSAGVQLFSPAFLLAVPTALGGVGSLAIAVVQLVQGVQHLSLVVPNVVAGIAALQTAGAQFAQGVNHTMLAAQLGAPGIAVLQTAGGHFAQGIGHLTTAGNAAVTVLIS.

A PE domain is found at 1 to 92; sequence MQFLSVIPEQ…GATAYRNTEF (92 aa). A run of 8 helical transmembrane segments spans residues 23–43, 155–175, 203–223, 230–250, 261–281, 284–304, 315–335, and 347–367; these read SALS…VSAA, AAVA…NGVV, FIVA…AVVG, TFLT…LAGV, LASG…VQLF, AFLL…IAVV, LVVP…AQFA, and LGAP…QGIG.

Belongs to the mycobacterial PE family.

The protein resides in the cell membrane. This is an uncharacterized protein from Mycobacterium bovis (strain ATCC BAA-935 / AF2122/97).